A 147-amino-acid polypeptide reads, in one-letter code: Phospholipase A2-beta (147 aa).

A signal peptide spans 1-28 (MMFRTSLMRFAAAFFAIVFVVLVGVARS). Intrachain disulfides connect Cys-31–Cys-58, Cys-35–Cys-64, Cys-40–Cys-117, Cys-51–Cys-71, Cys-70–Cys-95, and Cys-77–Cys-88. The Ca(2+) site is built by Tyr-50, Gly-52, and His-55. His-74 is an active-site residue. Asp-75 contacts Ca(2+). A Prevents secretion from ER motif is present at residues 144–147 (KTEL).

The protein belongs to the phospholipase A2 family. Ca(2+) is required as a cofactor. As to expression, ubiquitous but expressed at a low level. Detected in vascular tissues and in the guard cells. Predominantly detected in pollen.

The protein localises to the secreted. It is found in the endoplasmic reticulum. It catalyses the reaction a 1,2-diacyl-sn-glycero-3-phosphocholine + H2O = a 1-acyl-sn-glycero-3-phosphocholine + a fatty acid + H(+). Its activity is regulated as follows. Inhibited by aristolochic acid. Its function is as follows. PA2 catalyzes the calcium-dependent hydrolysis of the 2-acyl groups in 3-sn-phosphoglycerides. Releases lysophospholipids (LPLs) and free fatty acids (FFAs) from membrane phospholipids in response to hormones and other external stimuli. Regulates the process of cell elongation and plays important roles in shoot gravitropism by mediating auxin-induced cell elongation. Involved in stomatal opening in response to light. Plays a role in pollen development and germination and tube growth. The sequence is that of Phospholipase A2-beta (PLA2-BETA) from Arabidopsis thaliana (Mouse-ear cress).